The primary structure comprises 498 residues: ATP synthase subunit beta, chloroplastic (498 aa).

172–179 serves as a coordination point for ATP; the sequence is GGAGVGKT.

Belongs to the ATPase alpha/beta chains family. As to quaternary structure, F-type ATPases have 2 components, CF(1) - the catalytic core - and CF(0) - the membrane proton channel. CF(1) has five subunits: alpha(3), beta(3), gamma(1), delta(1), epsilon(1). CF(0) has four main subunits: a(1), b(1), b'(1) and c(9-12).

The protein resides in the plastid. It is found in the chloroplast thylakoid membrane. The catalysed reaction is ATP + H2O + 4 H(+)(in) = ADP + phosphate + 5 H(+)(out). Functionally, produces ATP from ADP in the presence of a proton gradient across the membrane. The catalytic sites are hosted primarily by the beta subunits. The polypeptide is ATP synthase subunit beta, chloroplastic (Nicotiana tomentosiformis (Tobacco)).